A 578-amino-acid chain; its full sequence is Proline--tRNA ligase (578 aa).

The protein belongs to the class-II aminoacyl-tRNA synthetase family. ProS type 1 subfamily. As to quaternary structure, homodimer.

The protein localises to the cytoplasm. The enzyme catalyses tRNA(Pro) + L-proline + ATP = L-prolyl-tRNA(Pro) + AMP + diphosphate. In terms of biological role, catalyzes the attachment of proline to tRNA(Pro) in a two-step reaction: proline is first activated by ATP to form Pro-AMP and then transferred to the acceptor end of tRNA(Pro). As ProRS can inadvertently accommodate and process non-cognate amino acids such as alanine and cysteine, to avoid such errors it has two additional distinct editing activities against alanine. One activity is designated as 'pretransfer' editing and involves the tRNA(Pro)-independent hydrolysis of activated Ala-AMP. The other activity is designated 'posttransfer' editing and involves deacylation of mischarged Ala-tRNA(Pro). The misacylated Cys-tRNA(Pro) is not edited by ProRS. In Paraburkholderia phymatum (strain DSM 17167 / CIP 108236 / LMG 21445 / STM815) (Burkholderia phymatum), this protein is Proline--tRNA ligase.